A 269-amino-acid chain; its full sequence is Energy-coupling factor transporter ATP-binding protein EcfA1 (269 aa).

The 235-residue stretch at 8–242 (ITFNHVRFKY…GDGLTEIGLD (235 aa)) folds into the ABC transporter domain. 42–49 (GHNGSGKS) is an ATP binding site.

It belongs to the ABC transporter superfamily. Energy-coupling factor EcfA family. As to quaternary structure, forms a stable energy-coupling factor (ECF) transporter complex composed of 2 membrane-embedded substrate-binding proteins (S component), 2 ATP-binding proteins (A component) and 2 transmembrane proteins (T component).

Its subcellular location is the cell membrane. Functionally, ATP-binding (A) component of a common energy-coupling factor (ECF) ABC-transporter complex. Unlike classic ABC transporters this ECF transporter provides the energy necessary to transport a number of different substrates. The sequence is that of Energy-coupling factor transporter ATP-binding protein EcfA1 from Staphylococcus saprophyticus subsp. saprophyticus (strain ATCC 15305 / DSM 20229 / NCIMB 8711 / NCTC 7292 / S-41).